Reading from the N-terminus, the 258-residue chain is MLTVISPAKRLDWAKRELATTAPDFMDDAVTLARAAKRLSQADLRKLMDISADLAKLNADRFKVFEEAPEGERPAALAFAGDTYIGLEATSLDADTMDYAQDHLRILSGLYGLLRPLDAIRPYRLEMGSRLKTRKGPSLYAYWGPRLAQALNVQAKAVDTKTLINCASVEYFSAVDEKALDLDIVTPQFFEDKPGGPKIVSFFAKKARGAMARFVQERRLTSPHQILDFDTGGYSHAPDLSAPGKPAFLRSEAAQKAA.

The protein belongs to the UPF0246 family.

This is UPF0246 protein Jann_0444 from Jannaschia sp. (strain CCS1).